The sequence spans 259 residues: NAD kinase (259 aa).

Asp43 serves as the catalytic Proton acceptor. Residues 43–44 (DG), 111–112 (NE), and Arg136 contribute to the NAD(+) site.

This sequence belongs to the NAD kinase family. It depends on a divalent metal cation as a cofactor.

The protein localises to the cytoplasm. The catalysed reaction is NAD(+) + ATP = ADP + NADP(+) + H(+). Functionally, involved in the regulation of the intracellular balance of NAD and NADP, and is a key enzyme in the biosynthesis of NADP. Catalyzes specifically the phosphorylation on 2'-hydroxyl of the adenosine moiety of NAD to yield NADP. This chain is NAD kinase, found in Mycoplasma genitalium (strain ATCC 33530 / DSM 19775 / NCTC 10195 / G37) (Mycoplasmoides genitalium).